A 270-amino-acid polypeptide reads, in one-letter code: 5'-AMP-activated protein kinase subunit beta-1 (270 aa).

Residues M1 to L46 are disordered. G2 is lipidated: N-myristoyl glycine. T4 is modified (phosphothreonine). Phosphoserine occurs at positions 5 and 6. T19 bears the Phosphothreonine mark. A compositionally biased stretch (basic and acidic residues) spans R21–I36. Phosphoserine; by autocatalysis is present on residues S24 and S25. A phosphoserine mark is found at S40, S96, and S101. Residues E68 to F163 are glycogen-binding domain. Phosphoserine; by autocatalysis is present on S108. The residue at position 148 (T148) is a Phosphothreonine. S182 is modified (phosphoserine).

The protein belongs to the 5'-AMP-activated protein kinase beta subunit family. AMPK is a heterotrimer of an alpha catalytic subunit (PRKAA1 or PRKAA2), a beta (PRKAB1 or PRKAB2) and a gamma non-catalytic subunits (PRKAG1, PRKAG2 or PRKAG3). Interacts with FNIP1 and FNIP2. Post-translationally, phosphorylated when associated with the catalytic subunit (PRKAA1 or PRKAA2). Phosphorylated by ULK1; leading to negatively regulate AMPK activity and suggesting the existence of a regulatory feedback loop between ULK1 and AMPK.

Non-catalytic subunit of AMP-activated protein kinase (AMPK), an energy sensor protein kinase that plays a key role in regulating cellular energy metabolism. In response to reduction of intracellular ATP levels, AMPK activates energy-producing pathways and inhibits energy-consuming processes: inhibits protein, carbohydrate and lipid biosynthesis, as well as cell growth and proliferation. AMPK acts via direct phosphorylation of metabolic enzymes, and by longer-term effects via phosphorylation of transcription regulators. Also acts as a regulator of cellular polarity by remodeling the actin cytoskeleton; probably by indirectly activating myosin. Beta non-catalytic subunit acts as a scaffold on which the AMPK complex assembles, via its C-terminus that bridges alpha (PRKAA1 or PRKAA2) and gamma subunits (PRKAG1, PRKAG2 or PRKAG3). The protein is 5'-AMP-activated protein kinase subunit beta-1 (PRKAB1) of Pongo abelii (Sumatran orangutan).